The sequence spans 435 residues: Trigger factor (435 aa).

The PPIase FKBP-type domain occupies 163–248 (GDFVTFDFKG…VKEIKVKELP (86 aa)).

It belongs to the FKBP-type PPIase family. Tig subfamily.

Its subcellular location is the cytoplasm. It carries out the reaction [protein]-peptidylproline (omega=180) = [protein]-peptidylproline (omega=0). Its function is as follows. Involved in protein export. Acts as a chaperone by maintaining the newly synthesized protein in an open conformation. Functions as a peptidyl-prolyl cis-trans isomerase. The protein is Trigger factor of Geobacter sp. (strain M21).